We begin with the raw amino-acid sequence, 197 residues long: Large ribosomal subunit protein uL10 (197 aa).

Positions G163–N197 are disordered.

It belongs to the universal ribosomal protein uL10 family. In terms of assembly, part of the ribosomal stalk of the 50S ribosomal subunit. The N-terminus interacts with L11 and the large rRNA to form the base of the stalk. The C-terminus forms an elongated spine to which L12 dimers bind in a sequential fashion forming a multimeric L10(L12)X complex.

Its function is as follows. Forms part of the ribosomal stalk, playing a central role in the interaction of the ribosome with GTP-bound translation factors. This chain is Large ribosomal subunit protein uL10, found in Pseudarthrobacter chlorophenolicus (strain ATCC 700700 / DSM 12829 / CIP 107037 / JCM 12360 / KCTC 9906 / NCIMB 13794 / A6) (Arthrobacter chlorophenolicus).